The sequence spans 337 residues: Receptor like protein kinase S.3 (337 aa).

Residues 50 to 316 (FKESELFGTE…VNYLEGNDVL (267 aa)) form the Protein kinase domain. Residues 56-64 (FGTEANGTV) and Lys78 each bind ATP. Phosphotyrosine is present on Tyr123. The active-site Proton acceptor is the Asp171.

Belongs to the protein kinase superfamily. Ser/Thr protein kinase family.

It carries out the reaction L-seryl-[protein] + ATP = O-phospho-L-seryl-[protein] + ADP + H(+). The enzyme catalyses L-threonyl-[protein] + ATP = O-phospho-L-threonyl-[protein] + ADP + H(+). The sequence is that of Receptor like protein kinase S.3 (LECRKS3) from Arabidopsis thaliana (Mouse-ear cress).